The sequence spans 360 residues: Peptide chain release factor 1 (360 aa).

Gln-235 is subject to N5-methylglutamine. A compositionally biased stretch (polar residues) spans 285 to 295; that stretch reads AQQASEASTRK. The disordered stretch occupies residues 285–305; that stretch reads AQQASEASTRKSLIGSGDRSD.

The protein belongs to the prokaryotic/mitochondrial release factor family. Methylated by PrmC. Methylation increases the termination efficiency of RF1.

It localises to the cytoplasm. Functionally, peptide chain release factor 1 directs the termination of translation in response to the peptide chain termination codons UAG and UAA. In Thiobacillus denitrificans (strain ATCC 25259 / T1), this protein is Peptide chain release factor 1.